A 228-amino-acid polypeptide reads, in one-letter code: Phosphatidate cytidylyltransferase (228 aa).

6 helical membrane-spanning segments follow: residues 31–51 (FVIA…LVGL), 65–85 (INYL…LIFL), 93–113 (LVIM…MIGG), 131–151 (WTGL…VSLI), 165–185 (IYLF…DLFI), and 206–226 (GVLD…CINI).

It belongs to the CDS family.

Its subcellular location is the cell membrane. The enzyme catalyses a 1,2-diacyl-sn-glycero-3-phosphate + CTP + H(+) = a CDP-1,2-diacyl-sn-glycerol + diphosphate. It functions in the pathway phospholipid metabolism; CDP-diacylglycerol biosynthesis; CDP-diacylglycerol from sn-glycerol 3-phosphate: step 3/3. The protein is Phosphatidate cytidylyltransferase (cdsA) of Rickettsia prowazekii (strain Madrid E).